Here is an 892-residue protein sequence, read N- to C-terminus: Major core protein OPG136 precursor (892 aa).

Positions 616 to 698 (SPEGEETIIC…ILDRIITNAG (83 aa)) are excised as a propeptide.

The protein belongs to the orthopxvirus protein OPG136 family. As to quaternary structure, interacts with P39/A4. The precursor is cleaved by OPG083 to give rise to the 62 kDa mature protein during virion maturation. Proteolytic cleavage of major core proteins OPG136, OPG129, and OPG098, which occurs at a late stage of core formation, is required for production of infectious mature virions (MV).

The protein resides in the virion. Its function is as follows. Core protein 4a is the most abundant virion protein. Major component of the virion core that undergoes proteolytic processing during the immature virion (IV) to mature virion (MV) transition. In Homo sapiens (Human), this protein is Major core protein OPG136 precursor (OPG136).